Here is a 379-residue protein sequence, read N- to C-terminus: Endonuclease III homolog 1, chloroplastic (379 aa).

The transit peptide at 1 to 54 (MILLVNGGAATSIHPNAARFYRIGTMSRQIHGAVSSSKHISLKTQHPLSDSNSE) directs the protein to the chloroplast. The region spanning 244-272 (KYDGDIPSSLDDLLSLPGIGPKMAHLILH) is the HhH domain. Lysine 265 acts as the Nucleophile; for N-glycosylase activity in catalysis. [4Fe-4S] cluster-binding residues include cysteine 340, cysteine 347, cysteine 350, and cysteine 356.

This sequence belongs to the Nth/MutY family. [4Fe-4S] cluster serves as cofactor. Expressed at low levels in roots, stems, leaves and flowers.

Its subcellular location is the plastid. It localises to the chloroplast stroma. The protein resides in the chloroplast nucleoid. It carries out the reaction 2'-deoxyribonucleotide-(2'-deoxyribose 5'-phosphate)-2'-deoxyribonucleotide-DNA = a 3'-end 2'-deoxyribonucleotide-(2,3-dehydro-2,3-deoxyribose 5'-phosphate)-DNA + a 5'-end 5'-phospho-2'-deoxyribonucleoside-DNA + H(+). Bifunctional DNA N-glycosylase with associated apurinic/apyrimidinic (AP) lyase function that catalyzes the first step in base excision repair (BER), the primary repair pathway for the repair of oxidative DNA damage. The DNA N-glycosylase activity releases the damaged DNA base from DNA by cleaving the N-glycosidic bond, leaving an AP site. The AP lyase activity cleaves the phosphodiester bond 3' to the AP site by a beta-elimination. Primarily recognizes and repairs oxidative base damage of pyrimidines. The sequence is that of Endonuclease III homolog 1, chloroplastic from Arabidopsis thaliana (Mouse-ear cress).